The primary structure comprises 485 residues: Inosine-5'-monophosphate dehydrogenase (485 aa).

CBS domains follow at residues 97 to 154 and 155 to 211; these read IIRD…VSDV and MVRD…PDAS. NAD(+)-binding positions include aspartate 246 and 295 to 297; that span reads GIG. Residues glycine 297 and glycine 299 each contribute to the K(+) site. IMP is bound at residue serine 300. Cysteine 302 contributes to the K(+) binding site. The Thioimidate intermediate role is filled by cysteine 302. IMP contacts are provided by residues 335–337, 358–359, and 382–386; these read DGG, GS, and YRGMG. Arginine 398 functions as the Proton acceptor in the catalytic mechanism. Glutamate 409 serves as a coordination point for IMP. K(+)-binding residues include glutamate 463, serine 464, and histidine 465.

This sequence belongs to the IMPDH/GMPR family. Homotetramer. Requires K(+) as cofactor.

The catalysed reaction is IMP + NAD(+) + H2O = XMP + NADH + H(+). It participates in purine metabolism; XMP biosynthesis via de novo pathway; XMP from IMP: step 1/1. Mycophenolic acid (MPA) is a non-competitive inhibitor that prevents formation of the closed enzyme conformation by binding to the same site as the amobile flap. In contrast, mizoribine monophosphate (MZP) is a competitive inhibitor that induces the closed conformation. MPA is a potent inhibitor of mammalian IMPDHs but a poor inhibitor of the bacterial enzymes. MZP is a more potent inhibitor of bacterial IMPDH. Catalyzes the conversion of inosine 5'-phosphate (IMP) to xanthosine 5'-phosphate (XMP), the first committed and rate-limiting step in the de novo synthesis of guanine nucleotides, and therefore plays an important role in the regulation of cell growth. This chain is Inosine-5'-monophosphate dehydrogenase, found in Thermoplasma acidophilum (strain ATCC 25905 / DSM 1728 / JCM 9062 / NBRC 15155 / AMRC-C165).